A 356-amino-acid chain; its full sequence is Sporulation minus regulator 1 (356 aa).

A DNA-binding region spans residues 183 to 199 (HPLRQLPGNPWHKFFGN).

This sequence to N.crassa mta-2.

Its subcellular location is the nucleus. In terms of biological role, transcriptional activator that is required for post-fertilization events. It is required for the developmental events that occur in the female organ after fertilization. The chain is Sporulation minus regulator 1 (SMR1) from Podospora anserina (Pleurage anserina).